A 73-amino-acid chain; its full sequence is Mu-scoloptoxin(15)-Ssd1a (73 aa).

Residues 1-20 (MKFHIIFCLLAALMMTSAFA) form the signal peptide.

Post-translationally, contains 2 disulfide bonds. Expressed by the venom gland.

It is found in the secreted. Functionally, voltage-gated sodium channel inhibitor. The protein is Mu-scoloptoxin(15)-Ssd1a of Scolopendra dehaani (Thai centipede).